We begin with the raw amino-acid sequence, 269 residues long: Formamidopyrimidine-DNA glycosylase (269 aa).

Proline 2 serves as the catalytic Schiff-base intermediate with DNA. Catalysis depends on glutamate 3, which acts as the Proton donor. Lysine 57 acts as the Proton donor; for beta-elimination activity in catalysis. Residues histidine 90, arginine 109, and lysine 150 each contribute to the DNA site. The segment at 235-269 (QVYGRKGEPCRVCGTPIVATKHAQRATFYCRHCQK) adopts an FPG-type zinc-finger fold. Arginine 259 (proton donor; for delta-elimination activity) is an active-site residue.

The protein belongs to the FPG family. In terms of assembly, monomer. The cofactor is Zn(2+).

It catalyses the reaction Hydrolysis of DNA containing ring-opened 7-methylguanine residues, releasing 2,6-diamino-4-hydroxy-5-(N-methyl)formamidopyrimidine.. The catalysed reaction is 2'-deoxyribonucleotide-(2'-deoxyribose 5'-phosphate)-2'-deoxyribonucleotide-DNA = a 3'-end 2'-deoxyribonucleotide-(2,3-dehydro-2,3-deoxyribose 5'-phosphate)-DNA + a 5'-end 5'-phospho-2'-deoxyribonucleoside-DNA + H(+). Its function is as follows. Involved in base excision repair of DNA damaged by oxidation or by mutagenic agents. Acts as a DNA glycosylase that recognizes and removes damaged bases. Has a preference for oxidized purines, such as 7,8-dihydro-8-oxoguanine (8-oxoG). Has AP (apurinic/apyrimidinic) lyase activity and introduces nicks in the DNA strand. Cleaves the DNA backbone by beta-delta elimination to generate a single-strand break at the site of the removed base with both 3'- and 5'-phosphates. This is Formamidopyrimidine-DNA glycosylase from Salmonella paratyphi C (strain RKS4594).